The sequence spans 459 residues: Glycosyl hydrolase family 109 protein (459 aa).

The tat-type signal signal peptide spans 1-31; it reads MHNIHRRHFLKAAGAVTAGLITANITASTHA. NAD(+)-binding positions include 64–65, Asp86, 135–138, 155–156, and Asn184; these read ER, WEWH, and EV. Substrate-binding positions include Tyr213, Arg232, 244–247, and Tyr326; that span reads YPTH. Tyr244 lines the NAD(+) pocket.

It belongs to the Gfo/Idh/MocA family. Glycosyl hydrolase 109 subfamily. The cofactor is NAD(+). Post-translationally, predicted to be exported by the Tat system. The position of the signal peptide cleavage has not been experimentally proven.

Functionally, glycosidase. The sequence is that of Glycosyl hydrolase family 109 protein from Shewanella sp. (strain W3-18-1).